Consider the following 793-residue polypeptide: Cation channel sperm-associated auxiliary subunit delta (793 aa).

The first 20 residues, 1-20, serve as a signal peptide directing secretion; it reads MLMLMLVAAVTMWLRPLVTA. The Extracellular segment spans residues 21–725; that stretch reads QPLCRARTVR…AFPVQLVSAG (705 aa). 7 disulfides stabilise this stretch: cysteine 24/cysteine 370, cysteine 60/cysteine 146, cysteine 145/cysteine 153, cysteine 388/cysteine 497, cysteine 511/cysteine 703, cysteine 526/cysteine 573, and cysteine 625/cysteine 653. A glycan (N-linked (GlcNAc...) asparagine) is linked at asparagine 128. N-linked (GlcNAc...) asparagine glycans are attached at residues asparagine 231, asparagine 241, asparagine 473, asparagine 539, and asparagine 631. The chain crosses the membrane as a helical span at residues 726–747; that stretch reads VVMVLLISSILGSVWLAYMIPR. Residues 748–793 lie on the Cytoplasmic side of the membrane; the sequence is LLRTARGRRMTSFVAQLYGRCKTVCQFRASATARTGSKPMGRHRSS.

It belongs to the CATSPERD family. In terms of assembly, component of the CatSper complex or CatSpermasome composed of the core pore-forming members CATSPER1, CATSPER2, CATSPER3 and CATSPER4 as well as auxiliary members CATSPERB, CATSPERG, CATSPERD, CATSPERE, CATSPERZ, C2CD6/CATSPERT, TMEM249, TMEM262 and EFCAB9. HSPA1 may be an additional auxiliary complex member. The core complex members CATSPER1, CATSPER2, CATSPER3 and CATSPER4 form a heterotetrameric channel. The auxiliary CATSPERB, CATSPERG, CATSPERD and CATSPERE subunits form a pavilion-like structure over the pore which stabilizes the complex through interactions with CATSPER4, CATSPER3, CATSPER1 and CATSPER2 respectively. TMEM262/CATSPERH interacts with CATSPERB, further stabilizing the complex. C2CD6/CATSPERT interacts at least with CATSPERD and is required for targeting the CatSper complex in the flagellar membrane.

The protein localises to the cell projection. The protein resides in the cilium. It localises to the flagellum membrane. Its function is as follows. Auxiliary component of the CatSper complex, a complex involved in sperm cell hyperactivation. Sperm cell hyperactivation is needed for sperm motility which is essential late in the preparation of sperm for fertilization. Required for CATSPER1 stability before intraflagellar transport and/or incorporation of the CatSper complex channel into the flagellar membrane. The chain is Cation channel sperm-associated auxiliary subunit delta from Macaca fascicularis (Crab-eating macaque).